An 829-amino-acid chain; its full sequence is Pre-mRNA-splicing factor syf1 (829 aa).

HAT repeat units follow at residues Ser15–Gln47, Gly49–Lys81, Ser93–Gln125, Pro127–Ser161, Glu163–Ala182, Gly277–Ser312, Asp380–Ala418, Gly420–Arg456, Ala473–Leu505, Lys544–Asp578, Ile581–Glu615, and Gly689–Gln723. The segment at Ala799–Glu829 is disordered.

Belongs to the crooked-neck family. Associated with the spliceosome.

The protein localises to the nucleus. Its function is as follows. Involved in pre-mRNA splicing and cell cycle progression. The sequence is that of Pre-mRNA-splicing factor syf1 (msp-41) from Neurospora crassa (strain ATCC 24698 / 74-OR23-1A / CBS 708.71 / DSM 1257 / FGSC 987).